The primary structure comprises 122 residues: UPF0102 protein Rleg2_4331 (122 aa).

It belongs to the UPF0102 family.

The sequence is that of UPF0102 protein Rleg2_4331 from Rhizobium leguminosarum bv. trifolii (strain WSM2304).